Consider the following 585-residue polypeptide: DNA mismatch repair protein MutL (585 aa).

Belongs to the DNA mismatch repair MutL/HexB family.

In terms of biological role, this protein is involved in the repair of mismatches in DNA. It is required for dam-dependent methyl-directed DNA mismatch repair. May act as a 'molecular matchmaker', a protein that promotes the formation of a stable complex between two or more DNA-binding proteins in an ATP-dependent manner without itself being part of a final effector complex. The chain is DNA mismatch repair protein MutL from Methanoculleus marisnigri (strain ATCC 35101 / DSM 1498 / JR1).